The primary structure comprises 104 residues: MTGKAKPKKHTAKELQAKADAALTNRGGGKAGLADRTGKEKGGHAKYECPHCKITVPDLKTMQIHHESKHPKLTYEEPRNLHEALAAPAESSKPKPGIRGSLKK.

A compositionally biased stretch (basic residues) spans 1–11; that stretch reads MTGKAKPKKHT. 2 disordered regions span residues 1 to 46 and 64 to 104; these read MTGK…GHAK and IHHE…SLKK. 2 stretches are compositionally biased toward basic and acidic residues: residues 36-46 and 73-82; these read RTGKEKGGHAK and LTYEEPRNLH.

The protein resides in the nucleus. Its subcellular location is the cytoplasm. It is found in the stress granule. Required for acclimation to reactive oxygen species (ROS) responses downstream of beta-cyclocitral, including singlet oxygen 1O(2) detoxification reactions, especially upon light-mediated photooxidative stress, and leading to programmed cell death. Prevents leaf senescence. This chain is Protein METHYLENE BLUE SENSITIVITY 2, found in Arabidopsis thaliana (Mouse-ear cress).